The primary structure comprises 519 residues: Serine/threonine-protein kinase RIO3 (519 aa).

2 positions are modified to phosphoserine: Ser8 and Ser112. Position 122 is a phosphotyrosine (Tyr122). The tract at residues 122–159 (YEDSDSSEDEVDWQDTRDDPYRPAKPIPTPKKGFIGKG) is disordered. Positions 124-134 (DSDSSEDEVDW) are enriched in acidic residues. Phosphoserine is present on residues Ser125, Ser127, and Ser128. The Protein kinase domain maps to 251–519 (ETITGCISTG…DGGPPILYDE (269 aa)). ATP is bound by residues 257 to 265 (ISTGKESVV) and Lys290. The Proton acceptor role is filled by Asp406.

It belongs to the protein kinase superfamily. RIO-type Ser/Thr kinase family. In terms of assembly, interacts with CASP10. Interacts with IRF3; RIOK3 probably mediates the interaction of TBK1 with IRF3. Associated with 40S pre-ribosomal particles. The cofactor is Mg(2+). Post-translationally, autophosphorylated (in vitro).

It localises to the cytoplasm. It catalyses the reaction L-seryl-[protein] + ATP = O-phospho-L-seryl-[protein] + ADP + H(+). The catalysed reaction is L-threonyl-[protein] + ATP = O-phospho-L-threonyl-[protein] + ADP + H(+). Its function is as follows. Involved in regulation of type I interferon (IFN)-dependent immune response which plays a critical role in the innate immune response against DNA and RNA viruses. May act as an adapter protein essential for the recruitment of TBK1 to IRF3. Phosphorylates IFIH1 within the C-terminal region interfering with IFIH1 filament assembly on long dsRNA and resulting in attenuated IFIH1-signaling. Can inhibit CASP10 isoform 7-mediated activation of the NF-kappaB signaling pathway. May play a role in the biogenesis of the 40S ribosomal subunit. Involved in the processing of 21S pre-rRNA to the mature 18S rRNA. This Bos taurus (Bovine) protein is Serine/threonine-protein kinase RIO3 (RIOK3).